We begin with the raw amino-acid sequence, 207 residues long: Ribonuclease HII (207 aa).

Residues 12–201 form the RNase H type-2 domain; sequence DLVAGVDEVG…VRAAWEAREG (190 aa). A divalent metal cation is bound by residues Asp18, Glu19, and Asp110.

It belongs to the RNase HII family. Mn(2+) serves as cofactor. Requires Mg(2+) as cofactor.

The protein resides in the cytoplasm. The catalysed reaction is Endonucleolytic cleavage to 5'-phosphomonoester.. In terms of biological role, endonuclease that specifically degrades the RNA of RNA-DNA hybrids. The polypeptide is Ribonuclease HII (Pseudomonas putida (strain ATCC 47054 / DSM 6125 / CFBP 8728 / NCIMB 11950 / KT2440)).